Here is a 1021-residue protein sequence, read N- to C-terminus: Collagen alpha-1(I) chain (1021 aa).

The segment at 1–1021 is disordered; that stretch reads DEKSAGGISV…PGPPGPPGPP (1021 aa). Position 3 is an allysine (K3). The residue at position 4 (S4) is a Phosphoserine. 4-hydroxyproline is present on residues P23, P26, P29, P38, P41, P44, P59, P74, P80, P89, and P95. Over residues 31 to 50 the composition is skewed to low complexity; sequence PQGFQGPPGEPGEPGASGPM. Residues 62–76 are compositionally biased toward basic and acidic residues; sequence NGDDGEAGKPGRPGE. Position 98 is a 5-hydroxylysine; alternate (K98). Residue K98 is glycosylated (O-linked (Gal...) hydroxylysine; alternate). S104 carries the phosphoserine modification. A compositionally biased stretch (low complexity) spans 112-128; the sequence is DAGPAGPKGEPGSPGEN. P122, P125, P131, P140, P146, P167, P176, P179, P206, P209, P221, P227, P236, P242, P245, and P260 each carry 4-hydroxyproline. Low complexity predominate over residues 146–164; sequence PGASGPAGARGNDGATGAA. The segment covering 166–178 has biased composition (pro residues); that stretch reads PPGPTGPAGPPGF. The span at 212–262 shows a compositional bias: low complexity; it reads AGAAGPAGNPGADGQPGAKGANGAPGIAGAPGFPGARGPSGPQGPSGAPGP. K263 bears the 5-hydroxylysine mark. A 4-hydroxyproline mark is found at P269, P272, P284, P293, P308, P314, P323, and P329. The segment covering 318–327 has biased composition (gly residues); it reads GERGGPGSRG. K338 carries the post-translational modification 5-hydroxylysine. 4-hydroxyproline occurs at positions 347, 356, 362, 368, 377, 380, 389, 398, 404, 416, 425, 434, 437, 455, 472, 478, 484, 490, 496, 502, 514, 523, 534, 546, 549, 555, 561, and 570. Over residues 371–425 the composition is skewed to low complexity; that stretch reads KGLTGSPGSPGPDGKTGPPGPAGQDGRPGPAGPPGARGQAGVMGFPGPKGAAGEP. Residues 484–493 show a composition bias toward low complexity; sequence PGEAGKPGEQ. A compositionally biased stretch (low complexity) spans 536–558; that stretch reads NDGAKGDAGAPGAPGSQGAPGLQ. At K582 the chain carries 5-hydroxylysine. 4-hydroxyproline is present on residues P588 and P603. Over residues 615-629 the composition is skewed to low complexity; the sequence is AGPSGPAGPTGARGA. At S618 the chain carries Phosphoserine. 4-hydroxyproline occurs at positions 630, 636, 639, 648, 654, 681, and 690. Positions 642-672 are enriched in low complexity; sequence AGFAGPPGADGQPGAKGEPGDAGAKGDAGPS. K693 carries the post-translational modification 5-hydroxylysine. Residues 698 to 714 are compositionally biased toward low complexity; the sequence is SAGPPGATGFPGAAGRV. 4-hydroxyproline is present on residues P702 and P708. P716 bears the 3-hydroxyproline mark. P717, P726, P729, P750, P759, P768, P777, P794, P803, P806, P812, P827, P833, P839, P848, and P854 each carry 4-hydroxyproline. Positions 743-752 are enriched in low complexity; sequence ETGPAGRPGE. Positions 762 to 777 are enriched in low complexity; it reads SGEKGSPGADGPAGAP. Residues 826 to 836 show a composition bias toward pro residues; the sequence is PPGPMGPPGLA. Residues 838–853 are compositionally biased toward low complexity; that stretch reads PPGEAGREGSPGAEGS. The residue at position 863 (K863) is a 5-hydroxylysine. The span at 871-886 shows a compositional bias: pro residues; the sequence is PGPPGAPGAPGAPGPV. 4-hydroxyproline occurs at positions 874, 877, and 880. A compositionally biased stretch (low complexity) spans 907–921; it reads AGPAGARGPAGPQGP. Positions 922-936 are enriched in basic and acidic residues; it reads RGDKGETGEQGDRGI. K925 carries the 5-hydroxylysine modification. K937 carries the post-translational modification 5-hydroxylysine; alternate. A glycan (O-linked (Gal...) hydroxylysine; alternate) is linked at K937. 4-hydroxyproline occurs at positions 952, 955, 973, and 988. Low complexity predominate over residues 955-988; sequence PGEQGPSGASGPAGPRGPPGSAGTPGKDGLNGLP. P993 is modified (3-hydroxyproline). Residue P994 is modified to 4-hydroxyproline. The segment covering 1006–1021 has biased composition (pro residues); it reads VGPPGPPGPPGPPGPP. P1008 bears the 3-hydroxyproline mark. 4-hydroxyproline is present on P1009. P1011 bears the 3-hydroxyproline mark. P1012 is subject to 4-hydroxyproline. A 3-hydroxyproline modification is found at P1014. 3 positions are modified to 4-hydroxyproline: P1015, P1018, and P1021.

This sequence belongs to the fibrillar collagen family. In terms of assembly, trimers of one alpha 2(I) and two alpha 1(I) chains. Post-translationally, contains mostly 4-hydroxyproline. Proline residues at the third position of the tripeptide repeating unit (G-X-Y) are hydroxylated in some or all of the chains. In terms of processing, contains 3-hydroxyproline at a few sites. This modification occurs on the first proline residue in the sequence motif Gly-Pro-Hyp, where Hyp is 4-hydroxyproline. Lysine residues at the third position of the tripeptide repeating unit (G-X-Y) are 5-hydroxylated in some or all of the chains. Post-translationally, O-glycosylated on hydroxylated lysine residues. The O-linked glycan consists of a Glc-Gal disaccharide. As to expression, expressed in bones.

It is found in the secreted. Its subcellular location is the extracellular space. The protein localises to the extracellular matrix. Functionally, type I collagen is a member of group I collagen (fibrillar forming collagen). The sequence is that of Collagen alpha-1(I) chain from Doedicurus sp. (South American giant glyptodont).